A 69-amino-acid chain; its full sequence is DNA-directed RNA polymerase subunit epsilon (69 aa).

This sequence belongs to the RNA polymerase subunit epsilon family. In terms of assembly, monomer. RNAP is composed of a core of 2 alpha, a beta and a beta' subunit. The core is associated with a delta subunit, and at least one of epsilon or omega. When a sigma factor is associated with the core the holoenzyme is formed, which can initiate transcription.

The protein localises to the cytoplasm. The protein resides in the nucleoid. It catalyses the reaction RNA(n) + a ribonucleoside 5'-triphosphate = RNA(n+1) + diphosphate. Its function is as follows. A non-essential component of RNA polymerase (RNAP). Has a similar structure to bacteriophage T7 protein Gp2 (AC P03704), which is known to bind to RNAP in the DNA binding-cleft. Unlike Gp2 however, this protein does not inhibit transcription initiation. In vitro reconstitution experiments show this subunit is dispensible. In Bacillus subtilis (strain 168), this protein is DNA-directed RNA polymerase subunit epsilon.